Here is a 370-residue protein sequence, read N- to C-terminus: Endopolygalacturonase A (370 aa).

The signal sequence occupies residues 1–19 (MPSAKPLFCLATLAGAALA). Positions 20–32 (APAPSRATDFNKR) are excised as a propeptide. C35 and C50 are joined by a disulfide. PbH1 repeat units follow at residues 162-192 (SDNL…DISE), 193-214 (STYI…AINS), 215-235 (GENI…SIGS), 244-265 (VKNV…RIKT), 273-295 (VEDI…VIEQ), and 307-352 (SNGV…DITG). C209 and C225 form a disulfide bridge. The active site involves H229. N-linked (GlcNAc...) asparagine glycosylation occurs at N246. 2 cysteine pairs are disulfide-bonded: C335–C340 and C359–C368.

It belongs to the glycosyl hydrolase 28 family.

It localises to the secreted. It catalyses the reaction (1,4-alpha-D-galacturonosyl)n+m + H2O = (1,4-alpha-D-galacturonosyl)n + (1,4-alpha-D-galacturonosyl)m.. In terms of biological role, involved in maceration and soft-rotting of plant tissue. Hydrolyzes the 1,4-alpha glycosidic bonds of de-esterified pectate in the smooth region of the plant cell wall. This chain is Endopolygalacturonase A (pgaA), found in Aspergillus awamori (Black koji mold).